The sequence spans 223 residues: Twisted gastrulation protein homolog 1 (223 aa).

The signal sequence occupies residues 1-25; it reads MKLHYVAVLTLAILMFLTWLPASLS. 2 N-linked (GlcNAc...) asparagine glycosylation sites follow: asparagine 52 and asparagine 81.

It belongs to the twisted gastrulation protein family. In terms of assembly, interacts with CHRD and BMP4. This interaction enhances CHRD/BMP4 complex formation. Interacts with BMP7.

It localises to the secreted. Its function is as follows. May be involved in dorsoventral axis formation. Seems to antagonize BMP signaling by forming ternary complexes with CHRD and BMPs, thereby preventing BMPs from binding to their receptors. In addition to the anti-BMP function, also has pro-BMP activity, partly mediated by cleavage and degradation of CHRD, which releases BMPs from ternary complexes. May be an important modulator of BMP-regulated cartilage development and chondrocyte differentiation. May play a role in thymocyte development. The protein is Twisted gastrulation protein homolog 1 (TWSG1) of Pongo abelii (Sumatran orangutan).